Consider the following 564-residue polypeptide: Dihydroxy-acid dehydratase (564 aa).

Asp80 contributes to the Mg(2+) binding site. Cys121 serves as a coordination point for [2Fe-2S] cluster. Residues Asp122 and Lys123 each coordinate Mg(2+). An N6-carboxylysine modification is found at Lys123. Cys194 is a [2Fe-2S] cluster binding site. Residue Glu447 participates in Mg(2+) binding. Ser473 (proton acceptor) is an active-site residue.

It belongs to the IlvD/Edd family. In terms of assembly, homodimer. [2Fe-2S] cluster serves as cofactor. Requires Mg(2+) as cofactor.

It catalyses the reaction (2R)-2,3-dihydroxy-3-methylbutanoate = 3-methyl-2-oxobutanoate + H2O. The enzyme catalyses (2R,3R)-2,3-dihydroxy-3-methylpentanoate = (S)-3-methyl-2-oxopentanoate + H2O. It functions in the pathway amino-acid biosynthesis; L-isoleucine biosynthesis; L-isoleucine from 2-oxobutanoate: step 3/4. The protein operates within amino-acid biosynthesis; L-valine biosynthesis; L-valine from pyruvate: step 3/4. In terms of biological role, functions in the biosynthesis of branched-chain amino acids. Catalyzes the dehydration of (2R,3R)-2,3-dihydroxy-3-methylpentanoate (2,3-dihydroxy-3-methylvalerate) into 2-oxo-3-methylpentanoate (2-oxo-3-methylvalerate) and of (2R)-2,3-dihydroxy-3-methylbutanoate (2,3-dihydroxyisovalerate) into 2-oxo-3-methylbutanoate (2-oxoisovalerate), the penultimate precursor to L-isoleucine and L-valine, respectively. The sequence is that of Dihydroxy-acid dehydratase from Listeria innocua serovar 6a (strain ATCC BAA-680 / CLIP 11262).